Here is a 98-residue protein sequence, read N- to C-terminus: MSLTYMNMLMAFTTSLLGLLMYRSHMMSSLLCLEGMMLSLFVMVTITILNMKFTLASMMPIILLVFAACEAALGLSLLVMVSTIYGMDYVQNLNLLKC.

3 helical membrane passes run 1–21, 29–49, and 61–81; these read MSLT…GLLM, SLLC…ITIL, and IILL…LVMV.

This sequence belongs to the complex I subunit 4L family. As to quaternary structure, core subunit of respiratory chain NADH dehydrogenase (Complex I) which is composed of 45 different subunits.

It localises to the mitochondrion inner membrane. It carries out the reaction a ubiquinone + NADH + 5 H(+)(in) = a ubiquinol + NAD(+) + 4 H(+)(out). In terms of biological role, core subunit of the mitochondrial membrane respiratory chain NADH dehydrogenase (Complex I) which catalyzes electron transfer from NADH through the respiratory chain, using ubiquinone as an electron acceptor. Part of the enzyme membrane arm which is embedded in the lipid bilayer and involved in proton translocation. The polypeptide is NADH-ubiquinone oxidoreductase chain 4L (MT-ND4L) (Ectophylla alba (White bat)).